Consider the following 259-residue polypeptide: Ribosomal RNA large subunit methyltransferase E (259 aa).

G58, W60, D78, D96, and D120 together coordinate S-adenosyl-L-methionine. K160 serves as the catalytic Proton acceptor.

It belongs to the class I-like SAM-binding methyltransferase superfamily. RNA methyltransferase RlmE family.

It is found in the cytoplasm. It catalyses the reaction uridine(2552) in 23S rRNA + S-adenosyl-L-methionine = 2'-O-methyluridine(2552) in 23S rRNA + S-adenosyl-L-homocysteine + H(+). In terms of biological role, specifically methylates the uridine in position 2552 of 23S rRNA at the 2'-O position of the ribose in the fully assembled 50S ribosomal subunit. This chain is Ribosomal RNA large subunit methyltransferase E, found in Methanococcus vannielii (strain ATCC 35089 / DSM 1224 / JCM 13029 / OCM 148 / SB).